The primary structure comprises 128 residues: Riboflavin kinase (128 aa).

Position 12 to 17 (12 to 17 (GKGEGK)) interacts with CDP. Positions 41 and 43 each coordinate Mg(2+). The FMN site is built by threonine 97 and glutamate 105. 110-113 (IKLR) provides a ligand contact to CDP.

It belongs to the archaeal riboflavin kinase family. The cofactor is Mg(2+).

The catalysed reaction is riboflavin + CTP = CDP + FMN + H(+). Its pathway is cofactor biosynthesis; FMN biosynthesis; FMN from riboflavin (CTP route): step 1/1. In terms of biological role, catalyzes the CTP-dependent phosphorylation of riboflavin (vitamin B2) to form flavin mononucleotide (FMN). This is Riboflavin kinase from Methanococcus aeolicus (strain ATCC BAA-1280 / DSM 17508 / OCM 812 / Nankai-3).